The following is a 412-amino-acid chain: Branched-chain alpha-ketoacid dehydrogenase kinase (412 aa).

The transit peptide at 1-30 (MILTSVLGSGPRSWSSLWPLLGSSLSLRAR) directs the protein to the mitochondrion. Ser-31 bears the Phosphoserine mark. At Ser-52 the chain carries Phosphoserine; by autocatalysis. The region spanning 159–404 (LDDHKDVVTL…DVYLRLRHID (246 aa)) is the Histidine kinase domain. An N6-acetyllysine mark is found at Lys-192 and Lys-233. The ATP site is built by Asn-279 and Asp-315. Asn-279 is a Mg(2+) binding site. Positions 328, 330, and 333 each coordinate K(+). Residues Thr-334 and Thr-335 each contribute to the ATP site. Phosphoserine occurs at positions 356 and 360. His-364, Gly-367, and Leu-370 together coordinate ATP. K(+) is bound at residue Gly-367.

This sequence belongs to the PDK/BCKDK protein kinase family. In terms of assembly, homodimer. Homotetramer. Dimerizes through interaction of two opposing nucleotide-binding domains. Interacts with E2 component of the branched-chain alpha-ketoacid dehydrogenase (BCKDH) complex. Competes with BCKDK for binding to the E2 component; this interaction is modulated by branched-chain alpha-keto acids. At steady state, BCKDH holoenzyme contains BCKDK and BCKDHA is phosphorylated. In response to high levels of branched-chain alpha-keto acids, the inhibitory BCKDK is replaced by activating PPM1K leading to BCKDHA dephosphorylation and BCAA degradation. Autophosphorylated. In terms of tissue distribution, ubiquitous.

The protein resides in the mitochondrion matrix. It localises to the mitochondrion. It carries out the reaction L-seryl-[3-methyl-2-oxobutanoate dehydrogenase] + ATP = O-phospho-L-seryl-[3-methyl-2-oxobutanoate dehydrogenase] + ADP + H(+). The catalysed reaction is L-seryl-[protein] + ATP = O-phospho-L-seryl-[protein] + ADP + H(+). Functionally, serine/threonine-protein kinase component of macronutrients metabolism. Forms a functional kinase and phosphatase pair with PPM1K, serving as a metabolic regulatory node that coordinates branched-chain amino acids (BCAAs) with glucose and lipid metabolism via two distinct phosphoprotein targets: mitochondrial BCKDHA subunit of the branched-chain alpha-ketoacid dehydrogenase (BCKDH) complex and cytosolic ACLY, a lipogenic enzyme of Krebs cycle. Phosphorylates and inactivates mitochondrial BCKDH complex a multisubunit complex consisting of three multimeric components each involved in different steps of BCAA catabolism: E1 composed of BCKDHA and BCKDHB, E2 core composed of DBT monomers, and E3 composed of DLD monomers. Associates with the E2 component of BCKDH complex and phosphorylates BCKDHA on Ser-334, leading to conformational changes that interrupt substrate channeling between E1 and E2 and inactivates the BCKDH complex. Phosphorylates ACLY on Ser-455 in response to changes in cellular carbohydrate abundance such as occurs during fasting to feeding metabolic transition. Refeeding stimulates MLXIPL/ChREBP transcription factor, leading to increased BCKDK to PPM1K expression ratio, phosphorylation and activation of ACLY that ultimately results in the generation of malonyl-CoA and oxaloacetate immediate substrates of de novo lipogenesis and glucogenesis, respectively. Recognizes phosphosites having SxxE/D canonical motif. This chain is Branched-chain alpha-ketoacid dehydrogenase kinase (Bckdk), found in Mus musculus (Mouse).